The sequence spans 68 residues: Protein transport protein Sec61 gamma-1 subunit (68 aa).

Topologically, residues 1–32 are cytoplasmic; that stretch reads MDKVVKFAEPGRAFAKDSIRLVKRCTKPDRKE. The helical transmembrane segment at 33 to 61 threads the bilayer; that stretch reads FQKIAIATAVGFAIMGFIGFFVKLIHIPI. Over 62 to 68 the chain is Extracellular; sequence NNIIVGS.

It belongs to the SecE/SEC61-gamma family. In terms of assembly, heterotrimeric complex composed of SEC61-alpha, SEC61-beta and SEC61-gamma.

The protein resides in the endoplasmic reticulum membrane. Functionally, necessary for protein translocation in the endoplasmic reticulum. In Drosophila melanogaster (Fruit fly), this protein is Protein transport protein Sec61 gamma-1 subunit (SEC61G1).